We begin with the raw amino-acid sequence, 432 residues long: Adenylosuccinate synthetase (432 aa).

GTP contacts are provided by residues 13 to 19 (GDEGKGK) and 41 to 43 (GHT). D14 functions as the Proton acceptor in the catalytic mechanism. Mg(2+)-binding residues include D14 and G41. IMP is bound by residues 14-17 (DEGK), 39-42 (NAGH), T130, R144, Q225, T240, and R304. Catalysis depends on H42, which acts as the Proton donor. 300–306 (AVTGRPR) provides a ligand contact to substrate. Residues R306, 332–334 (KLD), and 415–417 (STG) each bind GTP.

This sequence belongs to the adenylosuccinate synthetase family. Homodimer. Requires Mg(2+) as cofactor.

Its subcellular location is the cytoplasm. The catalysed reaction is IMP + L-aspartate + GTP = N(6)-(1,2-dicarboxyethyl)-AMP + GDP + phosphate + 2 H(+). Its pathway is purine metabolism; AMP biosynthesis via de novo pathway; AMP from IMP: step 1/2. Its function is as follows. Plays an important role in the de novo pathway of purine nucleotide biosynthesis. Catalyzes the first committed step in the biosynthesis of AMP from IMP. This chain is Adenylosuccinate synthetase, found in Pasteurella multocida (strain Pm70).